Reading from the N-terminus, the 136-residue chain is Histone H3.1 (136 aa).

The interval 1-43 is disordered; the sequence is MARTKQTARKSTGGKAPRKQLATKAARKSAPATGGVKKPHRYR. An Asymmetric dimethylarginine; by PRMT6; alternate modification is found at Arg3. Arg3 is modified (citrulline; alternate). Residue Thr4 is modified to Phosphothreonine; by HASPIN and VRK1. Allysine; alternate is present on Lys5. Lys5 carries the N6,N6,N6-trimethyllysine; alternate modification. Lys5 is modified (N6,N6-dimethyllysine; alternate). Lys5 is subject to N6-(2-hydroxyisobutyryl)lysine; alternate. Residue Lys5 is modified to N6-(beta-hydroxybutyryl)lysine; alternate. Position 5 is an N6-acetyllysine; alternate (Lys5). The residue at position 5 (Lys5) is an N6-crotonyllysine; alternate. An N6-methyllysine; alternate modification is found at Lys5. Gln6 is subject to 5-glutamyl dopamine; alternate. A 5-glutamyl serotonin; alternate modification is found at Gln6. Thr7 carries the phosphothreonine; by PKC modification. Position 9 is a citrulline; alternate (Arg9). Position 9 is a symmetric dimethylarginine; by PRMT5; alternate (Arg9). Lys10 carries the post-translational modification N6,N6,N6-trimethyllysine; alternate. An N6,N6-dimethyllysine; alternate modification is found at Lys10. Residue Lys10 is modified to N6-(2-hydroxyisobutyryl)lysine; alternate. Lys10 bears the N6-(beta-hydroxybutyryl)lysine; alternate mark. Lys10 is modified (N6-acetyllysine; alternate). N6-crotonyllysine; alternate is present on Lys10. Position 10 is an N6-methyllysine; alternate (Lys10). Position 10 is an N6-butyryllysine; alternate (Lys10). Residue Lys10 is modified to N6-lactoyllysine; alternate. Position 11 is an ADP-ribosylserine; alternate (Ser11). The residue at position 11 (Ser11) is a Phosphoserine; alternate; by AURKB, AURKC, RPS6KA3, RPS6KA4 and RPS6KA5. Thr12 is modified (phosphothreonine; by PKC and CHEK1). Lys15 carries the post-translational modification N6-(2-hydroxyisobutyryl)lysine; alternate. At Lys15 the chain carries N6-(beta-hydroxybutyryl)lysine; alternate. N6-acetyllysine; alternate is present on Lys15. Lys15 carries the post-translational modification N6-lactoyllysine; alternate. The residue at position 15 (Lys15) is an N6-glutaryllysine; alternate. Lys15 bears the N6-succinyllysine; alternate mark. Arg18 carries the post-translational modification Citrulline; alternate. An Asymmetric dimethylarginine; by CARM1; alternate modification is found at Arg18. Lys19 and Lys24 each carry N6-(2-hydroxyisobutyryl)lysine; alternate. An N6-(beta-hydroxybutyryl)lysine; alternate mark is found at Lys19 and Lys24. N6-acetyllysine; alternate is present on residues Lys19 and Lys24. N6-crotonyllysine; alternate is present on residues Lys19 and Lys24. N6-methyllysine; alternate is present on residues Lys19 and Lys24. N6-butyryllysine; alternate occurs at positions 19 and 24. An N6-lactoyllysine; alternate mark is found at Lys19 and Lys24. An N6-glutaryllysine; alternate mark is found at Lys19 and Lys24. Residue Lys19 is the site of N6-decanoyllysine attachment. Residue Arg27 is modified to Citrulline. An N6,N6,N6-trimethyllysine; alternate modification is found at Lys28. Residue Lys28 is modified to N6,N6-dimethyllysine; alternate. Lys28 carries the N6-(2-hydroxyisobutyryl)lysine; alternate modification. An N6-(beta-hydroxybutyryl)lysine; alternate modification is found at Lys28. Lys28 carries the N6-acetyllysine; alternate modification. Lys28 carries the N6-crotonyllysine; alternate modification. Lys28 carries the N6-methyllysine; alternate modification. At Lys28 the chain carries N6-lactoyllysine; alternate. Lys28 carries the post-translational modification N6-glutaryllysine; alternate. Ser29 carries the post-translational modification ADP-ribosylserine; alternate. Ser29 carries the post-translational modification Phosphoserine; alternate; by AURKB, AURKC and RPS6KA5. Lys37 carries the N6,N6,N6-trimethyllysine; alternate modification. N6,N6-dimethyllysine; alternate is present on Lys37. At Lys37 the chain carries N6-(2-hydroxyisobutyryl)lysine; alternate. Lys37 is subject to N6-acetyllysine; alternate. The residue at position 37 (Lys37) is an N6-methyllysine; alternate. N6-methyllysine is present on Lys38. Tyr42 carries the phosphotyrosine modification. The residue at position 57 (Lys57) is an N6,N6,N6-trimethyllysine; alternate. Position 57 is an N6-(2-hydroxyisobutyryl)lysine; alternate (Lys57). Lys57 is subject to N6-(beta-hydroxybutyryl)lysine; alternate. The residue at position 57 (Lys57) is an N6-acetyllysine; alternate. Lys57 carries the post-translational modification N6-crotonyllysine; alternate. Lys57 carries the N6-lactoyllysine; alternate modification. Lys57 is modified (N6-glutaryllysine; alternate). Lys57 is modified (N6-succinyllysine; alternate). At Lys57 the chain carries N6-methyllysine; by EHMT2; alternate. Position 58 is a phosphoserine (Ser58). N6-(2-hydroxyisobutyryl)lysine; alternate is present on residues Lys65 and Lys80. N6-methyllysine; alternate is present on residues Lys65 and Lys80. Position 80 is an N6,N6,N6-trimethyllysine; alternate (Lys80). Lys80 is modified (N6,N6-dimethyllysine; alternate). Lys80 is subject to N6-(beta-hydroxybutyryl)lysine; alternate. N6-acetyllysine; alternate is present on Lys80. At Lys80 the chain carries N6-lactoyllysine; alternate. An N6-glutaryllysine; alternate modification is found at Lys80. N6-succinyllysine; alternate is present on Lys80. Thr81 is subject to Phosphothreonine. Position 87 is a phosphoserine (Ser87). Position 108 is a phosphothreonine (Thr108). N6-acetyllysine; alternate occurs at positions 116 and 123. Lys116 and Lys123 each carry N6-glutaryllysine; alternate. An N6-(2-hydroxyisobutyryl)lysine; alternate modification is found at Lys123. Lys123 is modified (N6-(beta-hydroxybutyryl)lysine; alternate). Lys123 carries the post-translational modification N6-methyllysine; alternate. Lys123 carries the post-translational modification N6-succinyllysine; alternate.

Belongs to the histone H3 family. As to quaternary structure, the nucleosome is a histone octamer containing two molecules each of H2A, H2B, H3 and H4 assembled in one H3-H4 heterotetramer and two H2A-H2B heterodimers. The octamer wraps approximately 147 bp of DNA. Interacts with TONSL; CHAF1A; CHAF1B; MCM2 and DNAJC9. Interacts with NASP; NASP is a histone chaperone that stabilizes and maintains a soluble pool of Histone H3-H4 dimers. Acetylation is generally linked to gene activation. Acetylation on Lys-10 (H3K9ac) impairs methylation at Arg-9 (H3R8me2s). Acetylation on Lys-19 (H3K18ac) and Lys-24 (H3K24ac) favors methylation at Arg-18 (H3R17me). Acetylation at Lys-123 (H3K122ac) by EP300/p300 plays a central role in chromatin structure: localizes at the surface of the histone octamer and stimulates transcription, possibly by promoting nucleosome instability. Post-translationally, citrullination at Arg-9 (H3R8ci) and/or Arg-18 (H3R17ci) by PADI4 impairs methylation and represses transcription. In terms of processing, asymmetric dimethylation at Arg-18 (H3R17me2a) by CARM1 is linked to gene activation. Symmetric dimethylation at Arg-9 (H3R8me2s) by PRMT5 is linked to gene repression. Asymmetric dimethylation at Arg-3 (H3R2me2a) by PRMT6 is linked to gene repression and is mutually exclusive with H3 Lys-5 methylation (H3K4me2 and H3K4me3). H3R2me2a is present at the 3' of genes regardless of their transcription state and is enriched on inactive promoters, while it is absent on active promoters. Methylation at Lys-5 (H3K4me), Lys-37 (H3K36me) and Lys-80 (H3K79me) are linked to gene activation. Methylation at Lys-5 (H3K4me) facilitates subsequent acetylation of H3 and H4. Methylation at Lys-80 (H3K79me) is associated with DNA double-strand break (DSB) responses and is a specific target for TP53BP1. Methylation at Lys-10 (H3K9me) and Lys-28 (H3K27me) are linked to gene repression. Methylation at Lys-10 (H3K9me) is a specific target for HP1 proteins (CBX1, CBX3 and CBX5) and prevents subsequent phosphorylation at Ser-11 (H3S10ph) and acetylation of H3 and H4. Methylation at Lys-5 (H3K4me) and Lys-80 (H3K79me) require preliminary monoubiquitination of H2B at 'Lys-120'. Methylation at Lys-10 (H3K9me) and Lys-28 (H3K27me) are enriched in inactive X chromosome chromatin. Monomethylation at Lys-57 (H3K56me1) by EHMT2/G9A in G1 phase promotes interaction with PCNA and is required for DNA replication. Post-translationally, phosphorylated at Thr-4 (H3T3ph) by VRK1. Phosphorylated at Thr-4 (H3T3ph) by HASPIN during prophase and dephosphorylated during anaphase. Phosphorylation at Ser-11 (H3S10ph) by AURKB is crucial for chromosome condensation and cell-cycle progression during mitosis and meiosis. In addition phosphorylation at Ser-11 (H3S10ph) by RPS6KA4 and RPS6KA5 is important during interphase because it enables the transcription of genes following external stimulation, like mitogens, stress, growth factors or UV irradiation and result in the activation of genes, such as c-fos and c-jun. Phosphorylation at Ser-11 (H3S10ph), which is linked to gene activation, prevents methylation at Lys-10 (H3K9me) but facilitates acetylation of H3 and H4. Phosphorylation at Ser-11 (H3S10ph) by AURKB mediates the dissociation of HP1 proteins (CBX1, CBX3 and CBX5) from heterochromatin. Phosphorylation at Ser-11 (H3S10ph) is also an essential regulatory mechanism for neoplastic cell transformation. Phosphorylated at Ser-29 (H3S28ph) by MAP3K20 isoform 1, RPS6KA5 or AURKB during mitosis or upon ultraviolet B irradiation. Phosphorylation at Thr-7 (H3T6ph) by PRKCB is a specific tag for epigenetic transcriptional activation that prevents demethylation of Lys-5 (H3K4me) by LSD1/KDM1A. At centromeres, specifically phosphorylated at Thr-12 (H3T11ph) from prophase to early anaphase, by DAPK3 and PKN1. Phosphorylation at Thr-12 (H3T11ph) by PKN1 or isoform M2 of PKM (PKM2) is a specific tag for epigenetic transcriptional activation that promotes demethylation of Lys-10 (H3K9me) by KDM4C/JMJD2C. Phosphorylation at Thr-12 (H3T11ph) by chromatin-associated CHEK1 regulates the transcription of cell cycle regulatory genes by modulating acetylation of Lys-10 (H3K9ac). Phosphorylation at Tyr-42 (H3Y41ph) by JAK2 promotes exclusion of CBX5 (HP1 alpha) from chromatin. In terms of processing, monoubiquitinated by RAG1 in lymphoid cells, monoubiquitination is required for V(D)J recombination. Ubiquitinated by the CUL4-DDB-RBX1 complex in response to ultraviolet irradiation. This may weaken the interaction between histones and DNA and facilitate DNA accessibility to repair proteins. Lysine deamination at Lys-5 (H3K4all) to form allysine is mediated by LOXL2. Allysine formation by LOXL2 only takes place on H3K4me3 and results in gene repression. Post-translationally, crotonylation (Kcr) is specifically present in male germ cells and marks testis-specific genes in post-meiotic cells, including X-linked genes that escape sex chromosome inactivation in haploid cells. Crotonylation marks active promoters and enhancers and confers resistance to transcriptional repressors. It is also associated with post-meiotically activated genes on autosomes. In terms of processing, butyrylation of histones marks active promoters and competes with histone acetylation. It is present during late spermatogenesis. Succinylation at Lys-80 (H3K79succ) by KAT2A takes place with a maximum frequency around the transcription start sites of genes. It gives a specific tag for epigenetic transcription activation. Desuccinylation at Lys-123 (H3K122succ) by SIRT7 in response to DNA damage promotes chromatin condensation and double-strand breaks (DSBs) repair. Post-translationally, serine ADP-ribosylation by PARP1 or PARP2 constitutes the primary form of ADP-ribosylation of proteins in response to DNA damage. Serine ADP-ribosylation at Ser-11 (H3S10ADPr) promotes recruitment of CHD1L. H3S10ADPr is mutually exclusive with phosphorylation at Ser-11 (H3S10ph) and impairs acetylation at Lys-10 (H3K9ac). In terms of processing, serotonylated by TGM2 at Gln-6 (H3Q5ser) during serotonergic neuron differentiation. H3Q5ser is associated with trimethylation of Lys-5 (H3K4me3) and enhances general transcription factor IID (TFIID) complex-binding to H3K4me3, thereby facilitating transcription. Dopaminylated by TGM2 at Gln-6 (H3Q5dop) in ventral tegmental area (VTA) neurons. H3Q5dop mediates neurotransmission-independent role of nuclear dopamine by regulating relapse-related transcriptional plasticity in the reward system. Post-translationally, lactylated in macrophages by EP300/P300 by using lactoyl-CoA directly derived from endogenous or exogenous lactate, leading to stimulates gene transcription.

It is found in the nucleus. The protein resides in the chromosome. In terms of biological role, core component of nucleosome. Nucleosomes wrap and compact DNA into chromatin, limiting DNA accessibility to the cellular machineries which require DNA as a template. Histones thereby play a central role in transcription regulation, DNA repair, DNA replication and chromosomal stability. DNA accessibility is regulated via a complex set of post-translational modifications of histones, also called histone code, and nucleosome remodeling. This chain is Histone H3.1, found in Homo sapiens (Human).